Consider the following 401-residue polypeptide: Argininosuccinate synthase (401 aa).

ATP contacts are provided by residues 10-18 and Ala38; that span reads AYSGGVDTS. Tyr89 contributes to the L-citrulline binding site. Gly119 contributes to the ATP binding site. L-aspartate-binding residues include Thr121, Asn125, and Asp126. Residue Asn125 participates in L-citrulline binding. Positions 129, 177, 186, 262, and 274 each coordinate L-citrulline.

Belongs to the argininosuccinate synthase family. Type 1 subfamily. As to quaternary structure, homotetramer.

It is found in the cytoplasm. The catalysed reaction is L-citrulline + L-aspartate + ATP = 2-(N(omega)-L-arginino)succinate + AMP + diphosphate + H(+). It participates in amino-acid biosynthesis; L-arginine biosynthesis; L-arginine from L-ornithine and carbamoyl phosphate: step 2/3. The polypeptide is Argininosuccinate synthase (Synechococcus sp. (strain WH7803)).